Here is a 281-residue protein sequence, read N- to C-terminus: sn-glycerol-3-phosphate transport system permease protein UgpE (281 aa).

The next 6 helical transmembrane spans lie at 16 to 36 (LILG…AATL), 85 to 105 (FSIT…IVWF), 113 to 133 (FFWM…FPTV), 142 to 162 (LDSY…TFLF), 202 to 222 (ALFV…LLII), and 247 to 267 (WNSV…IVLV). The ABC transmembrane type-1 domain occupies 77 to 268 (LLNSFVMAFS…IPPVVIVLVM (192 aa)).

This sequence belongs to the binding-protein-dependent transport system permease family. UgpAE subfamily. The complex is composed of two ATP-binding proteins (UgpC), two transmembrane proteins (UgpA and UgpE) and a solute-binding protein (UgpB).

It is found in the cell inner membrane. Part of the ABC transporter complex UgpBAEC involved in sn-glycerol-3-phosphate (G3P) import. Probably responsible for the translocation of the substrate across the membrane. Can also transport glycerophosphoryl diesters, which are hydrolyzed to G3P and alcohol during transport. The G3P moiety can be detected in the cytoplasm whereas the corresponding alcohol is usually found in the culture medium. It was proposed by Yang et al that the complex could also transport glycerol-2-phosphate (G2P) in vivo, but it was shown later by Wuttge et al that UgpB does not bind G2P, questioning this transport activity. G2P might be converted in the periplasm to G3P before its transport. The protein is sn-glycerol-3-phosphate transport system permease protein UgpE of Escherichia coli (strain K12).